The primary structure comprises 92 residues: Small ribosomal subunit protein uS19c (92 aa).

Belongs to the universal ribosomal protein uS19 family.

Its subcellular location is the plastid. The protein localises to the chloroplast. Its function is as follows. Protein S19 forms a complex with S13 that binds strongly to the 16S ribosomal RNA. The chain is Small ribosomal subunit protein uS19c from Phaeodactylum tricornutum (strain CCAP 1055/1).